A 116-amino-acid polypeptide reads, in one-letter code: Aspartate 1-decarboxylase (116 aa).

Serine 25 serves as the catalytic Schiff-base intermediate with substrate; via pyruvic acid. Position 25 is a pyruvic acid (Ser) (serine 25). Threonine 57 provides a ligand contact to substrate. The Proton donor role is filled by tyrosine 58. Substrate is bound at residue glycine 72–alanine 74.

It belongs to the PanD family. Heterooctamer of four alpha and four beta subunits. It depends on pyruvate as a cofactor. In terms of processing, is synthesized initially as an inactive proenzyme, which is activated by self-cleavage at a specific serine bond to produce a beta-subunit with a hydroxyl group at its C-terminus and an alpha-subunit with a pyruvoyl group at its N-terminus.

It is found in the cytoplasm. It catalyses the reaction L-aspartate + H(+) = beta-alanine + CO2. It functions in the pathway cofactor biosynthesis; (R)-pantothenate biosynthesis; beta-alanine from L-aspartate: step 1/1. Its function is as follows. Catalyzes the pyruvoyl-dependent decarboxylation of aspartate to produce beta-alanine. In Helicobacter acinonychis (strain Sheeba), this protein is Aspartate 1-decarboxylase.